The sequence spans 175 residues: UPF0398 protein SUB1405 (175 aa).

It belongs to the UPF0398 family.

The polypeptide is UPF0398 protein SUB1405 (Streptococcus uberis (strain ATCC BAA-854 / 0140J)).